Consider the following 223-residue polypeptide: Cytidylate kinase (223 aa).

Gly-10–Thr-18 provides a ligand contact to ATP.

Belongs to the cytidylate kinase family. Type 1 subfamily.

It is found in the cytoplasm. The catalysed reaction is CMP + ATP = CDP + ADP. The enzyme catalyses dCMP + ATP = dCDP + ADP. This chain is Cytidylate kinase, found in Streptococcus pneumoniae (strain Hungary19A-6).